The primary structure comprises 422 residues: UPF0761 membrane protein Paes_1471 (422 aa).

6 helical membrane passes run leucine 47–phenylalanine 67, serine 103–isoleucine 123, phenylalanine 143–alanine 163, leucine 185–proline 205, lysine 208–serine 228, and glycine 247–leucine 267.

Belongs to the UPF0761 family.

It localises to the cell inner membrane. The protein is UPF0761 membrane protein Paes_1471 of Prosthecochloris aestuarii (strain DSM 271 / SK 413).